The sequence spans 194 residues: Ras-related protein Rab-22A (194 aa).

12–20 contributes to the GTP binding site; it reads GDTGVGKSS. The Effector region motif lies at 34-42; that stretch reads INPTIGASF. Residues 60–64, 118–121, and 148–150 contribute to the GTP site; these read DTAGQ, NKCD, and SAK. The tract at residues 170 to 194 is disordered; that stretch reads DANPASGGKGFKLRRQPSEPKRSCC. Over residues 185-194 the composition is skewed to basic and acidic residues; sequence QPSEPKRSCC. S-geranylgeranyl cysteine attachment occurs at residues C193 and C194.

This sequence belongs to the small GTPase superfamily. Rab family. In terms of assembly, binds EEA1. Interacts (in its GTP-bound form) with RINL. Interacts directly with ZFYVE20. Interacts (in its GTP-bound form) with RABGEF1. In terms of tissue distribution, detected in brain and heart, and at lower levels in lung and spleen.

Its subcellular location is the endosome membrane. The protein localises to the cell membrane. It localises to the early endosome. The protein resides in the late endosome. It is found in the cell projection. Its subcellular location is the ruffle. The protein localises to the cytoplasmic vesicle. It localises to the phagosome. The protein resides in the phagosome membrane. Its function is as follows. Plays a role in endocytosis and intracellular protein transport. Mediates trafficking of TF from early endosomes to recycling endosomes. Required for NGF-mediated endocytosis of NTRK1, and subsequent neurite outgrowth. Binds GTP and GDP and has low GTPase activity. Alternates between a GTP-bound active form and a GDP-bound inactive form. In Mus musculus (Mouse), this protein is Ras-related protein Rab-22A (Rab22a).